The following is a 310-amino-acid chain: Bifunctional phosphoglucose/phosphomannose isomerase (310 aa).

The region spanning 22 to 152 (FDGSFRTGTF…IRPKHEDIEE (131 aa)) is the SIS domain. The D-fructose 6-phosphate site is built by Gly41, Ser42, Ser80, Ser82, Thr85, and Arg128. Catalysis depends on Glu202, which acts as the Proton acceptor. D-fructose 6-phosphate contacts are provided by His218 and Lys306. Residue His218 is the Proton donor of the active site. The active-site Proton acceptor is Lys306.

This sequence belongs to the PGI/PMI family. As to quaternary structure, homodimer.

It carries out the reaction alpha-D-glucose 6-phosphate = beta-D-fructose 6-phosphate. The enzyme catalyses D-mannose 6-phosphate = D-fructose 6-phosphate. With respect to regulation, inhibited by low concentrations of erythrose 4-phosphate and 6-phosphogluconate. Dual specificity isomerase that catalyzes the isomerization of both glucose-6-phosphate and mannose-6-phosphate to fructose-6-phosphate with similar catalytic efficiency. This chain is Bifunctional phosphoglucose/phosphomannose isomerase, found in Thermoplasma acidophilum (strain ATCC 25905 / DSM 1728 / JCM 9062 / NBRC 15155 / AMRC-C165).